The chain runs to 401 residues: Nicotinate phosphoribosyltransferase (401 aa).

Residue histidine 221 is modified to Phosphohistidine; by autocatalysis.

This sequence belongs to the NAPRTase family. In terms of processing, transiently phosphorylated on a His residue during the reaction cycle. Phosphorylation strongly increases the affinity for substrates and increases the rate of nicotinate D-ribonucleotide production. Dephosphorylation regenerates the low-affinity form of the enzyme, leading to product release.

It carries out the reaction nicotinate + 5-phospho-alpha-D-ribose 1-diphosphate + ATP + H2O = nicotinate beta-D-ribonucleotide + ADP + phosphate + diphosphate. Its pathway is cofactor biosynthesis; NAD(+) biosynthesis; nicotinate D-ribonucleotide from nicotinate: step 1/1. Functionally, catalyzes the synthesis of beta-nicotinate D-ribonucleotide from nicotinate and 5-phospho-D-ribose 1-phosphate at the expense of ATP. This chain is Nicotinate phosphoribosyltransferase, found in Erwinia tasmaniensis (strain DSM 17950 / CFBP 7177 / CIP 109463 / NCPPB 4357 / Et1/99).